The primary structure comprises 481 residues: O-acetyltransferase andG (481 aa).

It belongs to the fumigaclavine B O-acetyltransferase family. As to quaternary structure, monomer.

Its pathway is secondary metabolite biosynthesis; terpenoid biosynthesis. In terms of biological role, O-acetyltransferase; part of the gene cluster that mediates the biosynthesis of anditomin, a fungal meroterpenoid. The first step of the pathway is the synthesis of 3,5-dimethylorsellinic acid (DMOA) by the polyketide synthase andM. DMOA is then converted to the phthalide compound 5,7-dihydroxy-4,6-dimethylphthalide (DHDMP) by the cytochrome P450 monooxygenase andK, which is further prenylated by the prenyltransferase andD to yield farnesyl-DHDMP. Further epoxidation by the FAD-dependent monooxygenase andE leads to epoxyfarnesyl-DHDMP. The next step involves the terpene cyclase andB that converts epoxyfarnesyl-DHDMP into preandiloid A through opening of the epoxide ring followed by the cyclization of the farnesyl moiety. Preandiloid A is in turn oxidized at the C-3 hydroxyl group to yield preandiloid B by the dehydrogenase andC. The dioxygenase andA is solely responsible for the dehydrogenation of preandiloid B leading to the enone preandiloid C, as well as for the intriguing structural rearrangement to generate the bicyclo[2.2.2]octane core, transforming preandiloid C into andiconin. FAD-binding monooxygenase andJ then produces andilesin D which is reduced by dehydrogenase andI to yield andilesin A. Action of acetyltransferase andG followed by a spontaneous acetate elimination leads then to andilesin B, which is in turn substrate of the short chain dehydrogenase andH to yield andilesin C. Finally, the dioxygenase andF catalyzes the transformation of andilesin C to anditomin. This is O-acetyltransferase andG from Emericella variicolor (Aspergillus stellatus).